The chain runs to 300 residues: Putative hydrolase ML2424 (300 aa).

The Nucleophile role is filled by Asp56. Mg(2+)-binding residues include Asp56, Asp58, and Asp231. The active-site Proton donor is Asp58.

The protein belongs to the HAD-like hydrolase superfamily. SerB family. Mg(2+) is required as a cofactor.

This Mycobacterium leprae (strain TN) protein is Putative hydrolase ML2424.